Here is a 306-residue protein sequence, read N- to C-terminus: C-type lectin domain family 10 member A (306 aa).

Topologically, residues 1–37 (MTMAYENFQNLGSEEKNQEAGKAPPQSFLCNILSWTH) are cytoplasmic. The helical; Signal-anchor for type II membrane protein transmembrane segment at 38–58 (LLLFSLGLSLLLLVVISVIGS) threads the bilayer. Residues 59–306 (QNSQLRRDLE…VCEMKLAKDS (248 aa)) are Extracellular-facing. 2 N-linked (GlcNAc...) asparagine glycosylation sites follow: asparagine 76 and asparagine 168. A C-type lectin domain is found at 174–300 (CCPLHWMEHE…QRPYRWVCEM (127 aa)). 3 cysteine pairs are disulfide-bonded: cysteine 175–cysteine 186, cysteine 203–cysteine 298, and cysteine 276–cysteine 290.

Homooligomer.

Its subcellular location is the membrane. Its function is as follows. Recognizes terminal galactose and N-acetylgalactosamine units. The chain is C-type lectin domain family 10 member A (Clec10a) from Rattus norvegicus (Rat).